We begin with the raw amino-acid sequence, 435 residues long: Adenylosuccinate synthetase (435 aa).

Residues 11–17 and 39–41 contribute to the GTP site; these read GDEGKGK and GHT. The active-site Proton acceptor is Asp-12. 2 residues coordinate Mg(2+): Asp-12 and Gly-39. IMP is bound by residues 12-15, 37-40, Thr-128, Arg-142, Gln-223, Thr-238, and Arg-302; these read DEGK and NAGH. His-40 (proton donor) is an active-site residue. Residue 298-304 participates in substrate binding; it reads SVTGRPR. GTP is bound by residues Arg-304, 330 to 332, and 412 to 414; these read KLD and STG.

It belongs to the adenylosuccinate synthetase family. As to quaternary structure, homodimer. Requires Mg(2+) as cofactor.

Its subcellular location is the cytoplasm. It carries out the reaction IMP + L-aspartate + GTP = N(6)-(1,2-dicarboxyethyl)-AMP + GDP + phosphate + 2 H(+). It functions in the pathway purine metabolism; AMP biosynthesis via de novo pathway; AMP from IMP: step 1/2. Functionally, plays an important role in the de novo pathway of purine nucleotide biosynthesis. Catalyzes the first committed step in the biosynthesis of AMP from IMP. The polypeptide is Adenylosuccinate synthetase (Coxiella burnetii (strain RSA 493 / Nine Mile phase I)).